A 172-amino-acid chain; its full sequence is Avenin-like a4 (172 aa).

A signal peptide spans 1-19 (MKTMFILALIALAATSVVA).

The protein belongs to the prolamin family. In terms of processing, contains 7 disulfide bonds.

Seed storage protein. Not integrated in the gluten polymer through disulfide bonds, unless incorporated by reduction and reoxidation during dough making. Increases dough strength and bread volume, but decreases dough stability when added into a base wheat flour. The protein is Avenin-like a4 of Triticum aestivum (Wheat).